A 204-amino-acid chain; its full sequence is ATP synthase subunit 4, mitochondrial (204 aa).

The next 2 helical transmembrane spans lie at 27-47 (GILA…LYVV) and 52-72 (ILLV…APLY).

In terms of assembly, F-type ATP synthases have 2 components, the catalytic core F(1) and the membrane-embedded component F(0), linked together by a central stalk and a peripheral stalk. The central stalk, also called rotor shaft, is often seen as part of F(1). The peripheral stalk is seen as part of F(0). F(0) contains the membrane channel next to the rotor. F-type ATP synthases form dimers but each monomer functions independently in ATP generation. The dimer consists of 18 different polypeptides: ATP1 (subunit alpha, part of F(1), 3 molecules per monomer), ATP2 (subunit beta, part of F(1), 3 molecules per monomer), ATP3 (subunit gamma, part of the central stalk), ATP4 (subunit b, part of the peripheral stalk), ATP5/OSCP (subunit 5/OSCP, part of the peripheral stalk), ATP6 (subunit a, part of the peripheral stalk), ATP7 (subunit d, part of the peripheral stalk), ATP8 (subunit 8, part of the peripheral stalk), OLI1 (subunit c, part of the rotor, 10 molecules per monomer), ATP14 (subunit h, part of the peripheral stalk), ATP15 (subunit epsilon, part of the central stalk), ATP16 (subunit delta, part of the central stalk), ATP17 (subunit f, part of the peripheral stalk), ATP18 (subunit i/j, part of the peripheral stalk). Dimer-specific subunits are ATP19 (subunit k, at interface between monomers), ATP20 (subunit g, at interface between monomers), TIM11 (subunit e, at interface between monomers). Also contains subunit L.

It localises to the mitochondrion inner membrane. Functionally, mitochondrial membrane ATP synthase (F(1)F(0) ATP synthase or Complex V) produces ATP from ADP in the presence of a proton gradient across the membrane which is generated by electron transport complexes of the respiratory chain. F-type ATP synthases consist of two structural domains, F(1) - containing the extramembraneous catalytic core, and F(0) - containing the membrane proton channel, linked together by a central stalk and a peripheral stalk. During catalysis, ATP synthesis in the catalytic domain of F(1) is coupled via a rotary mechanism of the central stalk subunits to proton translocation. Part of the complex F(0) domain and the peripheral stalk, which acts as a stator to hold the catalytic alpha/ATP1(3)beta/ATP2(3) subcomplex and subunit a/ATP6 static relative to the rotary elements. This chain is ATP synthase subunit 4, mitochondrial, found in Pichia angusta (Yeast).